The primary structure comprises 439 residues: Phthalate 4,5-dioxygenase oxygenase subunit (439 aa).

Residues 27–134 (WTPVCLLEEV…TREWGGFVWA (108 aa)) enclose the Rieske domain. Positions 70, 72, 89, and 92 each coordinate [2Fe-2S] cluster. The Fe cation site is built by His-181 and His-186.

It belongs to the bacterial ring-hydroxylating dioxygenase alpha subunit family. In terms of assembly, this dioxygenase system consists of two proteins: phthalate oxygenase and phthalate oxygenase reductase. Requires [2Fe-2S] cluster as cofactor. Fe cation serves as cofactor.

The catalysed reaction is phthalate + NADH + O2 + H(+) = cis-4,5-dihydroxycyclohexa-2,6-diene-1,2-dicarboxylate + NAD(+). It functions in the pathway xenobiotic degradation; phthalate degradation; 3,4-dihydroxybenzoate from phthalate: step 1/3. This Pseudomonas putida (Arthrobacter siderocapsulatus) protein is Phthalate 4,5-dioxygenase oxygenase subunit (pht3).